Reading from the N-terminus, the 180-residue chain is NAD(P)H-quinone oxidoreductase subunit I, chloroplastic (180 aa).

2 4Fe-4S ferredoxin-type domains span residues 55–84 and 95–124; these read GRIH…VDWK and LNYS…MTEE. Residues C64, C67, C70, C74, C104, C107, C110, and C114 each contribute to the [4Fe-4S] cluster site.

The protein belongs to the complex I 23 kDa subunit family. In terms of assembly, NDH is composed of at least 16 different subunits, 5 of which are encoded in the nucleus. Requires [4Fe-4S] cluster as cofactor.

It is found in the plastid. Its subcellular location is the chloroplast thylakoid membrane. It catalyses the reaction a plastoquinone + NADH + (n+1) H(+)(in) = a plastoquinol + NAD(+) + n H(+)(out). It carries out the reaction a plastoquinone + NADPH + (n+1) H(+)(in) = a plastoquinol + NADP(+) + n H(+)(out). Functionally, NDH shuttles electrons from NAD(P)H:plastoquinone, via FMN and iron-sulfur (Fe-S) centers, to quinones in the photosynthetic chain and possibly in a chloroplast respiratory chain. The immediate electron acceptor for the enzyme in this species is believed to be plastoquinone. Couples the redox reaction to proton translocation, and thus conserves the redox energy in a proton gradient. The sequence is that of NAD(P)H-quinone oxidoreductase subunit I, chloroplastic from Sorghum bicolor (Sorghum).